Reading from the N-terminus, the 210-residue chain is Guanylate kinase (210 aa).

The 179-residue stretch at 6–184 (GNIYIVVAPS…ARLDLISIVR (179 aa)) folds into the Guanylate kinase-like domain. An ATP-binding site is contributed by 13–20 (APSGAGKT).

This sequence belongs to the guanylate kinase family.

The protein resides in the cytoplasm. The enzyme catalyses GMP + ATP = GDP + ADP. Its function is as follows. Essential for recycling GMP and indirectly, cGMP. The sequence is that of Guanylate kinase from Chromobacterium violaceum (strain ATCC 12472 / DSM 30191 / JCM 1249 / CCUG 213 / NBRC 12614 / NCIMB 9131 / NCTC 9757 / MK).